We begin with the raw amino-acid sequence, 475 residues long: ATP synthase subunit beta 1 (475 aa).

153 to 160 (GGAGVGKT) is a binding site for ATP.

This sequence belongs to the ATPase alpha/beta chains family. F-type ATPases have 2 components, CF(1) - the catalytic core - and CF(0) - the membrane proton channel. CF(1) has five subunits: alpha(3), beta(3), gamma(1), delta(1), epsilon(1). CF(0) has three main subunits: a(1), b(2) and c(9-12). The alpha and beta chains form an alternating ring which encloses part of the gamma chain. CF(1) is attached to CF(0) by a central stalk formed by the gamma and epsilon chains, while a peripheral stalk is formed by the delta and b chains.

It localises to the cell membrane. The enzyme catalyses ATP + H2O + 4 H(+)(in) = ADP + phosphate + 5 H(+)(out). Functionally, produces ATP from ADP in the presence of a proton gradient across the membrane. The catalytic sites are hosted primarily by the beta subunits. The protein is ATP synthase subunit beta 1 of Mycoplasmopsis pulmonis (strain UAB CTIP) (Mycoplasma pulmonis).